The chain runs to 360 residues: uncharacterized protein (360 aa).

To P.multocida PM1082.

This is an uncharacterized protein from Pasteurella multocida (strain Pm70).